The sequence spans 780 residues: Gelsolin (780 aa).

The first 25 residues, 1 to 25 (MAPYCSSLRSALLVLALCALSPSHA), serve as a signal peptide directing secretion. Positions 28–48 (ASRGRAQERAPQSRVSETRPS) are disordered. Residues 51–174 (VVEHPEFLKA…YKKGGVASGF (124 aa)) form an actin-severing region. One copy of the Gelsolin-like 1 repeat lies at 74-155 (FDLVPVPPNL…EVQGFESSTF (82 aa)). At tyrosine 84 the chain carries Phosphotyrosine. Residues glycine 90, aspartate 91, glutamate 122, aspartate 134, glycine 139, and alanine 141 each coordinate Ca(2+). An actin-actin interfilament contact point region spans residues 121-124 (DESG). Position 160-167 (160-167 (KSGLKYKK)) interacts with a 1,2-diacyl-sn-glycero-3-phospho-(1D-myo-inositol-4,5-bisphosphate). Valine 170 is a Ca(2+) binding site. A 1,2-diacyl-sn-glycero-3-phospho-(1D-myo-inositol-4,5-bisphosphate) is bound at residue 186–194 (RLFQVKGRR). Residues 196–268 (VRATEVPVSW…SEEGSEPEAM (73 aa)) form a Gelsolin-like 2 repeat. 2 residues coordinate Ca(2+): glycine 211 and aspartate 212. The cysteines at positions 213 and 226 are disulfide-linked. Ca(2+) is bound by residues glutamate 234, aspartate 284, glutamate 327, aspartate 328, and glutamate 352. Positions 244 to 286 (GIRDNERSGRAQVHVSEEGSEPEAMLQVLGPKPDLPQGTEDTA) are disordered. A Gelsolin-like 3 repeat occupies 315 to 387 (DENPFAQSAL…LPEGGETPLF (73 aa)). Phosphotyrosine is present on residues tyrosine 407 and tyrosine 463. An actin-binding, Ca-sensitive region spans residues 432–780 (AAQHGMDDDG…LDRALAELAA (349 aa)). A Gelsolin-like 4 repeat occupies 453 to 534 (SNKVLVDPAT…VQGKEPAHLM (82 aa)). Glycine 469, aspartate 470, glutamate 500, aspartate 512, glycine 517, proline 519, and threonine 549 together coordinate Ca(2+). One copy of the Gelsolin-like 5 repeat lies at 576 to 640 (AVEVMPKAGA…EEGSEPDGFW (65 aa)). Lysine 582 carries the N6-acetyllysine modification. Ca(2+) is bound by residues asparagine 589 and aspartate 590. Residue tyrosine 601 is modified to Phosphotyrosine. Glutamate 612 is a Ca(2+) binding site. A Phosphotyrosine modification is found at tyrosine 649. One copy of the Gelsolin-like 6 repeat lies at 679 to 754 (IEEVPGELMQ…VRQGFEPPSF (76 aa)). Ca(2+)-binding residues include aspartate 694, aspartate 695, and glutamate 717. A Phosphothreonine modification is found at threonine 740.

Belongs to the villin/gelsolin family. Binds to actin and to fibronectin. Identified in a complex composed of ACTA1, COBL, GSN and TMSB4X. Interacts with the inactive form of EIF2AK2/PKR. Interacts with FLII. Phosphorylated on tyrosine residues in vitro.

The protein localises to the secreted. The protein resides in the cytoplasm. It is found in the cytoskeleton. Functionally, calcium-regulated, actin-modulating protein that binds to the plus (or barbed) ends of actin monomers or filaments, preventing monomer exchange (end-blocking or capping). It can promote the assembly of monomers into filaments (nucleation) as well as sever filaments already formed. Plays a role in ciliogenesis. This Rattus norvegicus (Rat) protein is Gelsolin (Gsn).